The sequence spans 373 residues: Ubiquitin domain-containing protein DSK2 (373 aa).

Residues 1–76 (MSLNIHIKSG…SVHLVKSQPK (76 aa)) enclose the Ubiquitin-like domain. Glycyl lysine isopeptide (Lys-Gly) (interchain with G-Cter in ubiquitin) cross-links involve residues Lys13 and Lys76. Residues 221 to 270 (DPNAGMGSAGGAASAFPAPGGDAPEEGSNTNTTSSSNTGNNAGTNAGTNA) are disordered. Positions 231–270 (GAASAFPAPGGDAPEEGSNTNTTSSSNTGNNAGTNAGTNA) are enriched in low complexity. The region spanning 327-371 (PPEERYEHQLRQLNDMGFFDFDRNVAALRRSGGSVQGALDSLLNG) is the UBA domain.

It is found in the nucleus. In terms of biological role, involved, with RAD23 in spindle pole body duplication. Involved in the ubiquitin-proteasome proteolytic pathway. In Saccharomyces cerevisiae (strain ATCC 204508 / S288c) (Baker's yeast), this protein is Ubiquitin domain-containing protein DSK2 (DSK2).